The chain runs to 298 residues: Acetylglutamate kinase (298 aa).

Substrate-binding positions include 64 to 65 (GG), Arg-86, and Asn-195.

It belongs to the acetylglutamate kinase family. ArgB subfamily.

Its subcellular location is the cytoplasm. The enzyme catalyses N-acetyl-L-glutamate + ATP = N-acetyl-L-glutamyl 5-phosphate + ADP. It participates in amino-acid biosynthesis; L-arginine biosynthesis; N(2)-acetyl-L-ornithine from L-glutamate: step 2/4. Functionally, catalyzes the ATP-dependent phosphorylation of N-acetyl-L-glutamate. This Aquifex aeolicus (strain VF5) protein is Acetylglutamate kinase.